A 467-amino-acid polypeptide reads, in one-letter code: Trigger factor (467 aa).

In terms of domain architecture, PPIase FKBP-type spans 174 to 261 (SDIAILTFKG…LQDLKTRELP (88 aa)). The tract at residues 439–467 (PKKALNEKVKSSKPKNTQKKTDKTKKDSP) is disordered. Residues 457–467 (KKTDKTKKDSP) are compositionally biased toward basic and acidic residues.

This sequence belongs to the FKBP-type PPIase family. Tig subfamily.

It localises to the cytoplasm. The enzyme catalyses [protein]-peptidylproline (omega=180) = [protein]-peptidylproline (omega=0). In terms of biological role, involved in protein export. Acts as a chaperone by maintaining the newly synthesized protein in an open conformation. Functions as a peptidyl-prolyl cis-trans isomerase. This is Trigger factor from Prochlorococcus marinus (strain SARG / CCMP1375 / SS120).